Consider the following 413-residue polypeptide: Serine/threonine-protein phosphatase 7 (413 aa).

A disulfide bond links Cys-28 and Cys-67. 4 residues coordinate Mn(2+): Asp-84, His-86, Asp-113, and Asn-145. His-146 functions as the Proton donor in the catalytic mechanism. 2 residues coordinate Mn(2+): His-197 and His-303. A disordered region spans residues 391–413; that stretch reads NVIDSDDEMDKSAMDTNNEQPNS. Residues 404–413 are compositionally biased toward polar residues; sequence MDTNNEQPNS.

This sequence belongs to the PPP phosphatase family. PP-7 subfamily. Monomer, homodimer, and heteromer. Interacts with calmodulin (CaM3 and CaM4) and HSFA1A/HSF1. Mn(2+) is required as a cofactor. In terms of tissue distribution, expressed in leaves, and, to a lower extent, in stems and flowers.

It is found in the nucleus. Its subcellular location is the nucleoplasm. It carries out the reaction O-phospho-L-seryl-[protein] + H2O = L-seryl-[protein] + phosphate. The catalysed reaction is O-phospho-L-threonyl-[protein] + H2O = L-threonyl-[protein] + phosphate. Its activity is regulated as follows. Inhibited by NaF and orthovanadate, as well as by divalent cations such as Ni(2+) and Zn(2+). Inhibited by polylysine with myelin basic protein as substrate, but activated by polylysine with pNPP as substrate. Reversibly regulated by redox agents. Inhibited by submillimolar Pi concentrations. Slightly repressed by calmodulin (CaM). Its function is as follows. Phosphatase active on para-nitrophenylphosphate (pNPP) and on various phosphoproteins such as myelin basic protein. Seems to act as a positive regulator of cryptochrome signaling involved in hypocotyl growth inhibition and cotyledon expansion under white and blue light conditions. Confers thermotolerance. Required for heat shock mediated-signaling pathway that leads to the expression of heat shock proteins (HSPs). The chain is Serine/threonine-protein phosphatase 7 (PP7) from Arabidopsis thaliana (Mouse-ear cress).